We begin with the raw amino-acid sequence, 348 residues long: Dihydroorotase (348 aa).

Zn(2+) is bound by residues His-14 and His-16. Substrate contacts are provided by residues His-16–Arg-18 and Asn-42. The Zn(2+) site is built by Lys-100, His-137, and His-175. Lys-100 carries the N6-carboxylysine modification. His-137 is a binding site for substrate. Substrate is bound at residue Leu-220. Asp-248 contributes to the Zn(2+) binding site. The active site involves Asp-248. Substrate-binding residues include His-252 and Ala-264.

This sequence belongs to the metallo-dependent hydrolases superfamily. DHOase family. Class II DHOase subfamily. As to quaternary structure, homodimer. Requires Zn(2+) as cofactor.

The enzyme catalyses (S)-dihydroorotate + H2O = N-carbamoyl-L-aspartate + H(+). It functions in the pathway pyrimidine metabolism; UMP biosynthesis via de novo pathway; (S)-dihydroorotate from bicarbonate: step 3/3. Functionally, catalyzes the reversible cyclization of carbamoyl aspartate to dihydroorotate. The polypeptide is Dihydroorotase (Pseudomonas aeruginosa (strain ATCC 15692 / DSM 22644 / CIP 104116 / JCM 14847 / LMG 12228 / 1C / PRS 101 / PAO1)).